Consider the following 335-residue polypeptide: Pro-cathepsin H (335 aa).

Residues 1–22 form the signal peptide; it reads MWAVLPLLCAGAWLLGAPACGA. A propeptide spans 23 to 97 (activation peptide); it reads AELAANSLEK…DELKRKYLWS (75 aa). 2 N-linked (GlcNAc...) asparagine glycosylation sites follow: asparagine 72 and asparagine 101. Cystine bridges form between cysteine 102–cysteine 327, cysteine 138–cysteine 181, cysteine 172–cysteine 214, and cysteine 272–cysteine 322. Positions 106–115 are excised as a propeptide; the sequence is KSNYLRGTGP. Cysteine 141 is an active-site residue. The N-linked (GlcNAc...) asparagine glycan is linked to asparagine 230. Residues histidine 281 and asparagine 301 contribute to the active site.

The protein belongs to the peptidase C1 family. Composed of a mini chain and a large chain. The large chain may be split into heavy and light chain. All chains are held together by disulfide bonds.

Its subcellular location is the lysosome. The enzyme catalyses Hydrolysis of proteins, acting as an aminopeptidase (notably, cleaving Arg-|-Xaa bonds) as well as an endopeptidase.. Important for the overall degradation of proteins in lysosomes. In Bos taurus (Bovine), this protein is Pro-cathepsin H (CTSH).